Here is a 278-residue protein sequence, read N- to C-terminus: Protein irg-2 (278 aa).

The interval 152–179 is disordered; that stretch reads NSIRGQPFKSLQPENRTPTQVTGHQQES. Residues 163-179 show a composition bias toward polar residues; it reads QPENRTPTQVTGHQQES.

Functionally, plays a role in innate immunity by conferring resistance to virulent strains of the Gram-negative bacterium P.aeruginosa via the zip-2 pathway and independent of the pmk-1 p38MAPK pathway. Induced as part of several immune responses to translational inhibition arising from endocytosis of ToxA during P.aeruginosa infection or exposure to exogenous cycloheximide. The protein is Protein irg-2 of Caenorhabditis elegans.